Here is a 408-residue protein sequence, read N- to C-terminus: Peptidase T (408 aa).

Zn(2+) is bound at residue His-78. Asp-80 is an active-site residue. Asp-141 is a Zn(2+) binding site. The active-site Proton acceptor is the Glu-175. Zn(2+) contacts are provided by Glu-176, Asp-198, and His-380.

The protein belongs to the peptidase M20B family. Requires Zn(2+) as cofactor.

The protein localises to the cytoplasm. It catalyses the reaction Release of the N-terminal residue from a tripeptide.. Functionally, cleaves the N-terminal amino acid of tripeptides. This is Peptidase T from Clostridium botulinum (strain Kyoto / Type A2).